Consider the following 226-residue polypeptide: Peptidyl-prolyl cis-trans isomerase CYP23 (226 aa).

Positions 1 to 22 (MGITRNLILGLACLAFVSIAKA) are cleaved as a signal peptide. In terms of domain architecture, PPIase cyclophilin-type spans 34–191 (VVFQTSYGDI…ERITILSTYY (158 aa)).

This sequence belongs to the cyclophilin-type PPIase family. As to expression, ubiquitous. Lower expression in roots.

The protein localises to the endoplasmic reticulum. The catalysed reaction is [protein]-peptidylproline (omega=180) = [protein]-peptidylproline (omega=0). In terms of biological role, PPIases accelerate the folding of proteins. It catalyzes the cis-trans isomerization of proline imidic peptide bonds in oligopeptides. The protein is Peptidyl-prolyl cis-trans isomerase CYP23 (CYP23) of Arabidopsis thaliana (Mouse-ear cress).